We begin with the raw amino-acid sequence, 300 residues long: Dihydroorotate dehydrogenase B (NAD(+)), catalytic subunit (300 aa).

Residues S20 and 44 to 45 (KG) each bind FMN. Substrate is bound by residues K44 and 68–72 (NAIGL). FMN contacts are provided by N98 and N125. Residue N125 participates in substrate binding. Residue C128 is the Nucleophile of the active site. 2 residues coordinate FMN: K163 and I189. 190 to 191 (NT) is a substrate binding site. FMN contacts are provided by residues G215, 241–242 (GG), and 263–264 (GT).

This sequence belongs to the dihydroorotate dehydrogenase family. Type 1 subfamily. Heterotetramer of 2 PyrK and 2 PyrD type B subunits. Requires FMN as cofactor.

Its subcellular location is the cytoplasm. It catalyses the reaction (S)-dihydroorotate + NAD(+) = orotate + NADH + H(+). Its pathway is pyrimidine metabolism; UMP biosynthesis via de novo pathway; orotate from (S)-dihydroorotate (NAD(+) route): step 1/1. In terms of biological role, catalyzes the conversion of dihydroorotate to orotate with NAD(+) as electron acceptor. The polypeptide is Dihydroorotate dehydrogenase B (NAD(+)), catalytic subunit (pyrD) (Lachnoclostridium phytofermentans (strain ATCC 700394 / DSM 18823 / ISDg) (Clostridium phytofermentans)).